The primary structure comprises 576 residues: MSGGDGRGHNSGAHNTGGNINGGPTGLGGNGGASDGSGWSSENNPWGGGSGSGVHWGGGSGHGNGGGNSNSGGGSNSSVAAPMAFGFPALAAPGAGTLGISVSGEALSAAIADIFAALKGPFKFSAWGIALYGILPSEIAKDDPNMMSKIVTSLPAETVTNVQVSTLPLDQATVSVTKRVTDVVKDTRQHIAVVAGVPMSVPVVNAKPTRTPGVFHASFPGVPSLTVSTVKGLPVSTTLPRGITEDKGRTAVPAGFTFGGGSHEAVIRFPKESGQKPVYVSVTDVLTPAQVKQRQDEEKRLQQEWNDAHPVEVAERNYEQARAELNQANKDVARNQERQAKAVQVYNSRKSELDAANKTLADAKAEIKQFERFAREPMAAGHRMWQMAGLKAQRAQTDVNNKKAAFDAAAKEKSDADVALSSALERRKQKENKEKDAKAKLDKESKRNKPGKATGKGKPVNNKWLNNAGKDLGSPVPDRIANKLRDKEFKSFDDFRKKFWEEVSKDPELSKQFSRNNNDRMKVGKAPKTRTQDVSGKRTSFELHHEKPISQNGGVYDMDNISVVTPKRHIDIHRGK.

3 disordered regions span residues 1-75 (MSGG…GGGS), 421-478 (SSAL…PVPD), and 506-557 (DPEL…GVYD). Positions 19 to 35 (NINGGPTGLGGNGGASD) are enriched in gly residues. Low complexity predominate over residues 36–45 (GSGWSSENNP). Positions 46–75 (WGGGSGSGVHWGGGSGHGNGGGNSNSGGGS) are enriched in gly residues. 2 stretches are compositionally biased toward basic and acidic residues: residues 424-447 (LERR…ESKR) and 535-548 (SGKR…HEKP). Zn(2+)-binding residues include His-544, His-569, and His-573.

It belongs to the colicin/pyosin nuclease family.

Functionally, this plasmid-coded bactericidal protein is an endonuclease active on both single- and double-stranded DNA but with undefined specificity. Its function is as follows. Colicins are polypeptide toxins produced by and active against E.coli and closely related bacteria. This Escherichia coli protein is Colicin-E7 (colE7).